Here is a 298-residue protein sequence, read N- to C-terminus: Isochorismatase domain-containing protein 1 (298 aa).

Tyrosine 160 is subject to Phosphotyrosine. Residue lysine 279 is modified to N6-succinyllysine.

It belongs to the isochorismatase family.

The sequence is that of Isochorismatase domain-containing protein 1 (ISOC1) from Homo sapiens (Human).